The sequence spans 161 residues: Nucleotide-binding protein Pcar_0033 (161 aa).

The protein belongs to the YajQ family.

Its function is as follows. Nucleotide-binding protein. This is Nucleotide-binding protein Pcar_0033 from Syntrophotalea carbinolica (strain DSM 2380 / NBRC 103641 / GraBd1) (Pelobacter carbinolicus).